A 119-amino-acid polypeptide reads, in one-letter code: Large ribosomal subunit protein bL19 (119 aa).

It belongs to the bacterial ribosomal protein bL19 family.

In terms of biological role, this protein is located at the 30S-50S ribosomal subunit interface and may play a role in the structure and function of the aminoacyl-tRNA binding site. The protein is Large ribosomal subunit protein bL19 of Photobacterium profundum (strain SS9).